We begin with the raw amino-acid sequence, 301 residues long: Putative S-adenosyl-L-methionine-dependent methyltransferase MMAR_4850 (301 aa).

Residues aspartate 127 and 156–157 contribute to the S-adenosyl-L-methionine site; that span reads DL.

The protein belongs to the UPF0677 family.

Its function is as follows. Exhibits S-adenosyl-L-methionine-dependent methyltransferase activity. This chain is Putative S-adenosyl-L-methionine-dependent methyltransferase MMAR_4850, found in Mycobacterium marinum (strain ATCC BAA-535 / M).